A 787-amino-acid polypeptide reads, in one-letter code: Bifunctional dethiobiotin synthetase/adenosylmethionine-8-amino-7-oxononanoate aminotransferase (787 aa).

ATP is bound at residue D23–I28. T27 provides a ligand contact to Mg(2+). T54 serves as a coordination point for substrate. Residues D61 and E123 each coordinate Mg(2+). Residues E123–G126 and K184–D185 each bind ATP. W323–W324 serves as a coordination point for (8S)-8-amino-7-oxononanoate. G384 to S385 is a pyridoxal 5'-phosphate binding site. Y421 serves as a coordination point for (8S)-8-amino-7-oxononanoate. D582 is a pyridoxal 5'-phosphate binding site. 2 residues coordinate (8S)-8-amino-7-oxononanoate: K611 and G645. H646–S647 contributes to the pyridoxal 5'-phosphate binding site. R756 contributes to the (8S)-8-amino-7-oxononanoate binding site.

It in the N-terminal section; belongs to the dethiobiotin synthetase family. This sequence in the C-terminal section; belongs to the class-III pyridoxal-phosphate-dependent aminotransferase family. BioA subfamily. Homodimer. The cofactor is Mg(2+). Requires pyridoxal 5'-phosphate as cofactor.

Its subcellular location is the mitochondrion matrix. It carries out the reaction (7R,8S)-7,8-diammoniononanoate + CO2 + ATP = (4R,5S)-dethiobiotin + ADP + phosphate + 3 H(+). It catalyses the reaction (8S)-8-amino-7-oxononanoate + S-adenosyl-L-methionine = S-adenosyl-4-methylsulfanyl-2-oxobutanoate + (7R,8S)-7,8-diammoniononanoate. Its pathway is cofactor biosynthesis; biotin biosynthesis; biotin from 7,8-diaminononanoate: step 1/2. It functions in the pathway cofactor biosynthesis; biotin biosynthesis; 7,8-diaminononanoate from 8-amino-7-oxononanoate (SAM route): step 1/1. Its function is as follows. Bifunctional enzyme; part of the cluster involved in the biosynthesis of biotin (also known as vitamin B8 or vitamin H), a water-soluble vitamin that functions as a prosthetic group of many carboxylases, such as acetyl-CoA carboxylase and pyruvate carboxylase. Catalyzes a mechanistically unusual reaction, the ATP-dependent insertion of CO2 between the N7 and N8 nitrogen atoms of 7,8-diaminopelargonic acid (DAPA) to form an ureido ring. Also catalyzes the transfer of the alpha-amino group from S-adenosyl-L-methionine (SAM) to 7-keto-8-aminopelargonic acid (KAPA) to form 7,8-diaminopelargonic acid (DAPA). It is the only animotransferase known to utilize SAM as an amino donor. The polypeptide is Bifunctional dethiobiotin synthetase/adenosylmethionine-8-amino-7-oxononanoate aminotransferase (Emericella nidulans (strain FGSC A4 / ATCC 38163 / CBS 112.46 / NRRL 194 / M139) (Aspergillus nidulans)).